The chain runs to 920 residues: Probable transport protein MmpL7 (920 aa).

The next 12 membrane-spanning stretches (helical) occupy residues 44–64 (LLVVAAWVAAAVIANLLLTFT), 210–230 (ITAWQSATIVTVAAVIAVLLL), 241–261 (AIVLLTADLSLAVAWPLAAVV), 271–291 (VFSWTLAAVLTIGTITAATML), 311–331 (LPAFALPGACVAIFTGPLLLA), 344–364 (LGVFVALAASLTVLPALIALA), 389–409 (SASALGTAAVLAICMLPIIGM), 761–781 (LIHDAVLLAVILLTVVALASM), 790–810 (AVGVGVLASYLAALGVSIALW), 822–842 (VPLVSFAVLASCGVPYLVAGI), 864–884 (GAVAPLAALGGVFGAGLVLVS), and 888–908 (FSVLSQIGTVVVLGLGVLITV).

Belongs to the resistance-nodulation-cell division (RND) (TC 2.A.6) family. MmpL subfamily.

It is found in the cell membrane. This Mycobacterium bovis (strain ATCC BAA-935 / AF2122/97) protein is Probable transport protein MmpL7 (mmpL7).